The following is a 252-amino-acid chain: 5-oxoprolinase subunit A (252 aa).

Belongs to the LamB/PxpA family. Forms a complex composed of PxpA, PxpB and PxpC.

It catalyses the reaction 5-oxo-L-proline + ATP + 2 H2O = L-glutamate + ADP + phosphate + H(+). Its function is as follows. Catalyzes the cleavage of 5-oxoproline to form L-glutamate coupled to the hydrolysis of ATP to ADP and inorganic phosphate. The protein is 5-oxoprolinase subunit A of Staphylococcus carnosus (strain TM300).